The primary structure comprises 678 residues: Penicillin-binding protein activator LpoA (678 aa).

Positions Met-1 to Gly-26 are cleaved as a signal peptide. Cys-27 is lipidated: N-palmitoyl cysteine. Residue Cys-27 is the site of S-diacylglycerol cysteine attachment. 3 stretches are compositionally biased toward low complexity: residues Ala-300–Gln-310, Gln-330–Ala-340, and Thr-513–Phe-528. Disordered regions lie at residues Ala-300–Ala-340 and Ala-496–Phe-528.

It belongs to the LpoA family. In terms of assembly, interacts with PBP1a.

It localises to the cell outer membrane. Functionally, regulator of peptidoglycan synthesis that is essential for the function of penicillin-binding protein 1A (PBP1a). The sequence is that of Penicillin-binding protein activator LpoA from Shigella flexneri serotype 5b (strain 8401).